The following is a 426-amino-acid chain: MSEEEKKVYLEDWRSAKEWGGFLYSIERWERIAEVEKIVCNACKEICLGLREEELLGLLAEGGMKKTLKEEFSEDKAKDARYLEYIVVDDVLLLDAHREYGGEVTKELVRQMLLGKEGKDIDKRYVDRVAGVVRERQRKREEETERSVKELVGDEEKAKSKEEKAKSKEEKAKSKRGRKGKSASAPSEQEEEKKESEVEEAEQGGEVEALPVEVGGARSKGGKKKSKGGRKCFKIHRRVLRWTKSPEKIKEEWDKGSEERWKGRSLEEIKEQKIVHDITGVLELLRSEDADRFFMDAGKYRKGGSERQRMVAIGALETGGQRMTGVVEVGTFKDGDGCPVVYHLRFKPTSIGSIGDVINPGVVEASDVGRVDEGEECEDADKFVYPKGVRFETVKETGSFQIVWKNPSDTSEVLRRLIVYCRPCVI.

Residues 136 to 172 (RQRKREEETERSVKELVGDEEKAKSKEEKAKSKEEKA) show a composition bias toward basic and acidic residues. The interval 136 to 230 (RQRKREEETE…GGKKKSKGGR (95 aa)) is disordered. The segment covering 220–230 (KGGKKKSKGGR) has biased composition (basic residues).

The protein belongs to the UPF0329 family.

This is UPF0329 protein ECU06_0040 from Encephalitozoon cuniculi (strain GB-M1) (Microsporidian parasite).